The chain runs to 129 residues: MAKAPIRARKRVRKQVSDGVAHIHASFNNTIVTITDRQGNALGWATAGGSGFRGSRKSTPFAAQVAAERCAEAVKEYGIKNLEVMVKGPGPGRESTIRALNAAGFRITNITDVTPIPHNGCRPPKKRRV.

It belongs to the universal ribosomal protein uS11 family. Part of the 30S ribosomal subunit. Interacts with proteins S7 and S18. Binds to IF-3.

Functionally, located on the platform of the 30S subunit, it bridges several disparate RNA helices of the 16S rRNA. Forms part of the Shine-Dalgarno cleft in the 70S ribosome. This is Small ribosomal subunit protein uS11 from Pectobacterium atrosepticum (strain SCRI 1043 / ATCC BAA-672) (Erwinia carotovora subsp. atroseptica).